The chain runs to 702 residues: Elongation factor G (702 aa).

The tr-type G domain maps to 8-290 (CQYRNIGISA…AIIEYLPAPN (283 aa)). Residues 17–24 (AHIDAGKT), 88–92 (DTPGH), and 142–145 (NKMD) contribute to the GTP site.

The protein belongs to the TRAFAC class translation factor GTPase superfamily. Classic translation factor GTPase family. EF-G/EF-2 subfamily.

It localises to the cytoplasm. Functionally, catalyzes the GTP-dependent ribosomal translocation step during translation elongation. During this step, the ribosome changes from the pre-translocational (PRE) to the post-translocational (POST) state as the newly formed A-site-bound peptidyl-tRNA and P-site-bound deacylated tRNA move to the P and E sites, respectively. Catalyzes the coordinated movement of the two tRNA molecules, the mRNA and conformational changes in the ribosome. The protein is Elongation factor G of Buchnera aphidicola subsp. Schizaphis graminum (strain Sg).